The chain runs to 319 residues: 1-aminocyclopropane-1-carboxylate oxidase (319 aa).

Residues 152-253 enclose the Fe2OG dioxygenase domain; sequence GPNFGSKVSN…RMSLASFYNP (102 aa). The Fe cation site is built by His-177, Asp-179, and His-234.

It belongs to the iron/ascorbate-dependent oxidoreductase family. It depends on Fe cation as a cofactor.

The catalysed reaction is 1-aminocyclopropane-1-carboxylate + L-ascorbate + O2 = ethene + L-dehydroascorbate + hydrogen cyanide + CO2 + 2 H2O. Its pathway is alkene biosynthesis; ethylene biosynthesis via S-adenosyl-L-methionine; ethylene from S-adenosyl-L-methionine: step 2/2. The protein is 1-aminocyclopropane-1-carboxylate oxidase (ACO) of Nicotiana tabacum (Common tobacco).